Reading from the N-terminus, the 185-residue chain is Ribosome-recycling factor (185 aa).

The protein belongs to the RRF family.

It is found in the cytoplasm. Functionally, responsible for the release of ribosomes from messenger RNA at the termination of protein biosynthesis. May increase the efficiency of translation by recycling ribosomes from one round of translation to another. This Thermosipho melanesiensis (strain DSM 12029 / CIP 104789 / BI429) protein is Ribosome-recycling factor.